A 1257-amino-acid polypeptide reads, in one-letter code: RAF-like serine/threonine-protein kinase 24 (1257 aa).

The disordered stretch occupies residues M1–G21. One can recognise a PB1 domain in the interval P191–S277. Composition is skewed to basic and acidic residues over residues V457–D480 and K493–S502. 2 disordered regions span residues V457–Q629 and S761–G789. S474 is subject to Phosphoserine. A compositionally biased stretch (low complexity) spans T533 to S548. Over residues K550–T576 the composition is skewed to basic and acidic residues. A Phosphoserine modification is found at S555. Residues S583–V593 are compositionally biased toward low complexity. Over residues E769 to S782 the composition is skewed to polar residues. S777 carries the phosphoserine modification. Positions L974 to M1239 constitute a Protein kinase domain. ATP is bound by residues L980 to V988 and K1001. Phosphoserine is present on S1013. The Proton acceptor role is filled by D1102.

Belongs to the protein kinase superfamily. Ser/Thr protein kinase family. Hyperphosphorylated in response to auxin in an ABP1- and TMK1-dependent manner.

The protein localises to the cytoplasm. The enzyme catalyses L-seryl-[protein] + ATP = O-phospho-L-seryl-[protein] + ADP + H(+). It catalyses the reaction L-threonyl-[protein] + ATP = O-phospho-L-threonyl-[protein] + ADP + H(+). With respect to regulation, activated by auxin via rapid phosphorylation downstream of ABP1 and TMK1 signaling. Functionally, RAF-like protein kinase acting, together with RAF20, as a central mediator of a fast response pathway to auxin involving proteins phosphorylation, and leading to rapid cellular responses including membrane depolarization and cytoplasmic streaming. Required for general growth and developmental process. In Arabidopsis thaliana (Mouse-ear cress), this protein is RAF-like serine/threonine-protein kinase 24.